Consider the following 461-residue polypeptide: Homocitrate synthase (461 aa).

The Pyruvate carboxyltransferase domain occupies Val-4 to Gln-259. Arg-12 lines the 2-oxoglutarate pocket. Residue Glu-13 coordinates Mg(2+). 2-oxoglutarate-binding residues include His-76, Arg-136, and Thr-170. His-198 and His-200 together coordinate Mg(2+). His-292 acts as the Proton acceptor in catalysis.

This sequence belongs to the alpha-IPM synthase/homocitrate synthase family. Homocitrate synthase LYS20/LYS21 subfamily. It depends on Mg(2+) as a cofactor. Mn(2+) is required as a cofactor.

It carries out the reaction acetyl-CoA + 2-oxoglutarate + H2O = (2R)-homocitrate + CoA + H(+). It participates in amino-acid biosynthesis; L-lysine biosynthesis via AAA pathway; L-alpha-aminoadipate from 2-oxoglutarate: step 1/5. Its function is as follows. Catalyzes the aldol-type condensation of 2-oxoglutarate with acetyl-CoA to yield homocitrate. Carries out the first step of the alpha-aminoadipate (AAA) lysine biosynthesis pathway. The sequence is that of Homocitrate synthase from Saccharolobus islandicus (strain Y.N.15.51 / Yellowstone #2) (Sulfolobus islandicus).